Consider the following 387-residue polypeptide: 3-ketoacyl-CoA thiolase (387 aa).

Catalysis depends on Cys91, which acts as the Acyl-thioester intermediate. Active-site proton acceptor residues include His343 and Cys373.

Belongs to the thiolase-like superfamily. Thiolase family. As to quaternary structure, heterotetramer of two alpha chains (FadB) and two beta chains (FadA).

The protein localises to the cytoplasm. It carries out the reaction an acyl-CoA + acetyl-CoA = a 3-oxoacyl-CoA + CoA. Its pathway is lipid metabolism; fatty acid beta-oxidation. Catalyzes the final step of fatty acid oxidation in which acetyl-CoA is released and the CoA ester of a fatty acid two carbons shorter is formed. This chain is 3-ketoacyl-CoA thiolase, found in Klebsiella pneumoniae subsp. pneumoniae (strain ATCC 700721 / MGH 78578).